The chain runs to 224 residues: MTQDQLKQAVAQAAVDFILPKLDEKSVVGVGTGSTANFFIDALAQHKTAFDGAVASSEATAQRLKGHGIPVYELNSVSELEFYVDGADESDAHLNLIKGGGAALTREKIVAAVAKTFICIADASKLVPVLGAFPLPVEVIPMARSHVARQLVKLGGDPVYREGVVTDNGNVILDVYNLQITNPVELEAQINAIVGVVTNGLFAARPADLLLLGTPEGVKSLKAE.

Residues T32 to T35, D85 to D88, and K98 to G101 each bind substrate. Catalysis depends on E107, which acts as the Proton acceptor. K125 provides a ligand contact to substrate.

Belongs to the ribose 5-phosphate isomerase family. Homodimer.

It carries out the reaction aldehydo-D-ribose 5-phosphate = D-ribulose 5-phosphate. The protein operates within carbohydrate degradation; pentose phosphate pathway; D-ribose 5-phosphate from D-ribulose 5-phosphate (non-oxidative stage): step 1/1. Functionally, catalyzes the reversible conversion of ribose-5-phosphate to ribulose 5-phosphate. In Pseudomonas putida (strain W619), this protein is Ribose-5-phosphate isomerase A.